A 299-amino-acid polypeptide reads, in one-letter code: MSSIKIECVLRENCHCGESPVWGEASNSLLFVDIPAKKVCRWNALSKQVQRVTLDAPVSSVALRQAGGYVATVGTKFCALNWEDESAVVLAAVDKDKKNNRFNDGKVDPAGRYFAGTMAEETAPAVLERHQGSLYALFADHHVEKYFDQVDISNGLDWSLDHKIFYYIDSLSYSVDAFDYDLQTGKISNRRSIYKMEKEEHIPDGMCIDTEGKLWVACYNGGRVIRLDPETGKRLQTVKLPVDKTTSCCFGGKDYSEMYVTCARDGLDPQGLLQQPEAGGIFKITGLGVKGLPPYPYAG.

Position 18 (Glu-18) interacts with a divalent metal cation. Arg-101, Asn-103, and Glu-121 together coordinate substrate. A divalent metal cation contacts are provided by Asn-154 and Asp-204. The active-site Proton donor/acceptor is Asp-204. Residues Lys-244 and Lys-253 each carry the N6-succinyllysine modification.

This sequence belongs to the SMP-30/CGR1 family. Monomer. It depends on Zn(2+) as a cofactor. The cofactor is Mn(2+). Requires Ca(2+) as cofactor. Mg(2+) serves as cofactor.

The protein resides in the cytoplasm. The catalysed reaction is D-glucono-1,5-lactone + H2O = D-gluconate + H(+). Its pathway is cofactor biosynthesis; L-ascorbate biosynthesis via UDP-alpha-D-glucuronate pathway; L-ascorbate from UDP-alpha-D-glucuronate: step 3/4. Gluconolactonase with low activity towards other sugar lactones, including gulonolactone and galactonolactone. Catalyzes a key step in ascorbic acid (vitamin C) biosynthesis. Can also hydrolyze diisopropyl phosphorofluoridate and phenylacetate (in vitro). Calcium-binding protein. Modulates Ca(2+) signaling, and Ca(2+)-dependent cellular processes and enzyme activities. This Sus scrofa (Pig) protein is Regucalcin (RGN).